The following is a 738-amino-acid chain: Protein Aster-B (738 aa).

Positions 1–81 are disordered; it reads MKGFKLSCTA…SGGKNSKKSQ (81 aa). Residues 8–19 show a composition bias toward polar residues; that stretch reads CTASNSNRSTPA. A phosphoserine mark is found at S28 and S30. The segment covering 41–51 has biased composition (basic and acidic residues); that stretch reads MVEKGSDHSSD. Residues 59 to 70 show a composition bias toward low complexity; it reads QGVQRSCSSQSG. The 68-residue stretch at 96–163 folds into the GRAM domain; the sequence is EDFRKLFKQL…KDICSMTKEK (68 aa). The interval 254-299 is disordered; the sequence is EENEVNDSSSKSSIETKPDASPQLPKKSITNSTLTSTGSSEAPVSF. Residues 259–268 are compositionally biased toward polar residues; the sequence is NDSSSKSSIE. S274 is subject to Phosphoserine. The segment covering 281-295 has biased composition (polar residues); sequence SITNSTLTSTGSSEA. Residues 372–543 form the VASt domain; the sequence is SGRQYVNEVF…ELTKTESTYL (172 aa). Phosphotyrosine is present on Y389. 2 positions are modified to phosphoserine: S550 and S581. 3 positions are modified to phosphothreonine: T584, T585, and T587. The chain crosses the membrane as a helical span at residues 623–643; sequence LLLVISCVICFSLVLLVVLNM.

As to expression, highly expressed in the adrenal gland (at protein level) and brain. Also found in the kidney, testis and macrophages.

It localises to the endoplasmic reticulum membrane. Its subcellular location is the cell membrane. Cholesterol transporter that mediates non-vesicular transport of cholesterol from the plasma membrane (PM) to the endoplasmic reticulum (ER). Contains unique domains for binding cholesterol and the PM, thereby serving as a molecular bridge for the transfer of cholesterol from the PM to the ER. Plays a crucial role in cholesterol homeostasis in the adrenal gland and has the unique ability to localize to the PM based on the level of membrane cholesterol. In lipid-poor conditions localizes to the ER membrane and in response to excess cholesterol in the PM is recruited to the endoplasmic reticulum-plasma membrane contact sites (EPCS) which is mediated by the GRAM domain. At the EPCS, the sterol-binding VASt/ASTER domain binds to the cholesterol in the PM and facilitates its transfer from the PM to ER. This is Protein Aster-B (Gramd1b) from Mus musculus (Mouse).